Consider the following 136-residue polypeptide: Congerin-2 (136 aa).

Serine 2 carries the N-acetylserine modification. In terms of domain architecture, Galectin spans 4–136 (RAEVRNIPFK…DARLTFVRLE (133 aa)). 70–76 (WQQEERS) is a binding site for a beta-D-galactoside.

In terms of assembly, homodimer.

Functionally, this protein binds beta-galactoside. Its physiological function is not yet known. This Conger myriaster (Conger eel) protein is Congerin-2.